A 187-amino-acid chain; its full sequence is Elongation factor P (187 aa).

This sequence belongs to the elongation factor P family.

Its subcellular location is the cytoplasm. The protein operates within protein biosynthesis; polypeptide chain elongation. Functionally, involved in peptide bond synthesis. Stimulates efficient translation and peptide-bond synthesis on native or reconstituted 70S ribosomes in vitro. Probably functions indirectly by altering the affinity of the ribosome for aminoacyl-tRNA, thus increasing their reactivity as acceptors for peptidyl transferase. The sequence is that of Elongation factor P from Ruegeria sp. (strain TM1040) (Silicibacter sp.).